A 492-amino-acid chain; its full sequence is Auxin transporter-like protein 1 (492 aa).

Residues 1 to 67 (MVPREQAEEA…DAWFSCASNQ (67 aa)) lie on the Cytoplasmic side of the membrane. A helical transmembrane segment spans residues 68 to 85 (VAQVLLTLPYSFSQLGML). Residues 86–87 (SG) lie on the Extracellular side of the membrane. Residues 88-108 (VLLQLFYGFMGSWTAYLISVL) traverse the membrane as a helical segment. Topologically, residues 109–143 (YVEYRSRKEKEGVSFKNHVIQWFEVLDGLLGPYWK) are cytoplasmic. Residues 144–164 (AAGLAFNCTFLLFGSVIQLIA) form a helical membrane-spanning segment. The Extracellular segment spans residues 165-180 (CASNIYYINDRLDKRT). Residues 181–201 (WTYIFGACCATTVFIPSFHNY) traverse the membrane as a helical segment. Arg202 is a topological domain (cytoplasmic). Residues 203-223 (IWSFLGLGMTTYTAWYLAIAA) traverse the membrane as a helical segment. Topologically, residues 224–240 (LLNGQAEGITHTGPTKL) are extracellular. A helical membrane pass occupies residues 241–261 (VLYFTGATNILYTFGGHAVTV). Residues 262-274 (EIMHAMWKPAKFK) lie on the Cytoplasmic side of the membrane. The helical transmembrane segment at 275–295 (YIYLLATLYVFTLTLPSASAM) threads the bilayer. The Extracellular portion of the chain corresponds to 296–322 (YWAFGDELLTHSNAFSLLPKTGWRDAA). A helical membrane pass occupies residues 323–343 (VILMLIHQFITFGFACTPLYF). Residues 344–364 (VWEKVIGMHDTKSICLRALAR) are Cytoplasmic-facing. A helical membrane pass occupies residues 365 to 385 (LPIVVPIWFLAIIFPFFGPIN). Residue Ser386 is a topological domain, extracellular. A helical transmembrane segment spans residues 387-407 (AVGALLVSFTVYIIPALAHIL). Residues 408–432 (TYRTASARMNAAEKPPFFLPSWTGM) are Cytoplasmic-facing. A helical membrane pass occupies residues 433-453 (FVLNMFIVVWVLVVGFGLGGW). Residues 454-492 (ASMVNFIRQIDTFGLFAKCYQCPKPAPALAQSPVPLPHH) lie on the Extracellular side of the membrane.

This sequence belongs to the amino acid/polyamine transporter 2 family. Amino acid/auxin permease (AAAP) (TC 2.A.18.1) subfamily.

It localises to the cell membrane. Its function is as follows. Carrier protein involved in proton-driven auxin influx. May mediate the formation of auxin gradient from developing leaves (site of auxin biosynthesis) to tips. This is Auxin transporter-like protein 1 from Oryza sativa subsp. japonica (Rice).